A 375-amino-acid polypeptide reads, in one-letter code: Queuine tRNA-ribosyltransferase (375 aa).

D89 serves as the catalytic Proton acceptor. Residues 89–93 (DSGGF), D143, Q187, and G214 contribute to the substrate site. Residues 245 to 251 (GVGKPED) are RNA binding. Catalysis depends on D264, which acts as the Nucleophile. The RNA binding; important for wobble base 34 recognition stretch occupies residues 269–273 (TRNAR). 4 residues coordinate Zn(2+): C302, C304, C307, and H333.

This sequence belongs to the queuine tRNA-ribosyltransferase family. In terms of assembly, homodimer. Within each dimer, one monomer is responsible for RNA recognition and catalysis, while the other monomer binds to the replacement base PreQ1. The cofactor is Zn(2+).

It carries out the reaction 7-aminomethyl-7-carbaguanine + guanosine(34) in tRNA = 7-aminomethyl-7-carbaguanosine(34) in tRNA + guanine. It participates in tRNA modification; tRNA-queuosine biosynthesis. Functionally, catalyzes the base-exchange of a guanine (G) residue with the queuine precursor 7-aminomethyl-7-deazaguanine (PreQ1) at position 34 (anticodon wobble position) in tRNAs with GU(N) anticodons (tRNA-Asp, -Asn, -His and -Tyr). Catalysis occurs through a double-displacement mechanism. The nucleophile active site attacks the C1' of nucleotide 34 to detach the guanine base from the RNA, forming a covalent enzyme-RNA intermediate. The proton acceptor active site deprotonates the incoming PreQ1, allowing a nucleophilic attack on the C1' of the ribose to form the product. After dissociation, two additional enzymatic reactions on the tRNA convert PreQ1 to queuine (Q), resulting in the hypermodified nucleoside queuosine (7-(((4,5-cis-dihydroxy-2-cyclopenten-1-yl)amino)methyl)-7-deazaguanosine). The chain is Queuine tRNA-ribosyltransferase from Salmonella enteritidis PT4 (strain P125109).